The following is a 173-amino-acid chain: Photosystem I assembly protein Ycf3 (173 aa).

TPR repeat units follow at residues 35–68 (AYIY…EENA), 72–105 (GETL…NPKQ), and 120–153 (GRAL…YPGG).

This sequence belongs to the Ycf3 family.

The protein localises to the cellular thylakoid membrane. Its function is as follows. Essential for the assembly of the photosystem I (PSI) complex. May act as a chaperone-like factor to guide the assembly of the PSI subunits. In Prochlorococcus marinus (strain SARG / CCMP1375 / SS120), this protein is Photosystem I assembly protein Ycf3.